Here is a 750-residue protein sequence, read N- to C-terminus: Polyribonucleotide nucleotidyltransferase (750 aa).

D489 and D495 together coordinate Mg(2+). One can recognise a KH domain in the interval 556–620; the sequence is PKMITRRIPN…EGIDKVIAKI (65 aa). Residues 630–701 form the S1 motif domain; sequence GSVYEVKVIK…KTRKDKVSRK (72 aa). The segment at 697 to 750 is disordered; it reads KVSRKALMEKPEGYKERAPRDRDDKRGSRDNNRGRDNRGRDNRRDDRKPRENKD. The segment covering 702–750 has biased composition (basic and acidic residues); the sequence is ALMEKPEGYKERAPRDRDDKRGSRDNNRGRDNRGRDNRRDDRKPRENKD.

This sequence belongs to the polyribonucleotide nucleotidyltransferase family. Mg(2+) serves as cofactor.

It is found in the cytoplasm. It catalyses the reaction RNA(n+1) + phosphate = RNA(n) + a ribonucleoside 5'-diphosphate. In terms of biological role, involved in mRNA degradation. Catalyzes the phosphorolysis of single-stranded polyribonucleotides processively in the 3'- to 5'-direction. The sequence is that of Polyribonucleotide nucleotidyltransferase from Christiangramia forsetii (strain DSM 17595 / CGMCC 1.15422 / KT0803) (Gramella forsetii).